Consider the following 378-residue polypeptide: tRNA-specific 2-thiouridylase MnmA (378 aa).

Residues glycine 9–serine 16 and methionine 35 contribute to the ATP site. The segment at asparagine 94–aspartate 96 is interaction with target base in tRNA. Cysteine 99 serves as the catalytic Nucleophile. The cysteines at positions 99 and 195 are disulfide-linked. Residue glycine 123 coordinates ATP. Positions lysine 145 to glutamine 147 are interaction with tRNA. The active-site Cysteine persulfide intermediate is the cysteine 195. Residues arginine 307 to tyrosine 308 are interaction with tRNA.

The protein belongs to the MnmA/TRMU family.

The protein resides in the cytoplasm. It carries out the reaction S-sulfanyl-L-cysteinyl-[protein] + uridine(34) in tRNA + AH2 + ATP = 2-thiouridine(34) in tRNA + L-cysteinyl-[protein] + A + AMP + diphosphate + H(+). Functionally, catalyzes the 2-thiolation of uridine at the wobble position (U34) of tRNA, leading to the formation of s(2)U34. The chain is tRNA-specific 2-thiouridylase MnmA from Xanthomonas euvesicatoria pv. vesicatoria (strain 85-10) (Xanthomonas campestris pv. vesicatoria).